A 129-amino-acid chain; its full sequence is MSWQEAEVRELKVGRYILIDDAPCKIVEITMSKPGKHGEAKGRIVAIGVFDNQKRSVVYPVKHKVKIPIIEKKNAQVLSVQNNEVQLMDSETFETFVLPLDPEIADKIKPGMEVPYWETMGMRKIMLQN.

A Hypusine modification is found at Lys36.

It belongs to the eIF-5A family.

The protein resides in the cytoplasm. Functions by promoting the formation of the first peptide bond. This Thermoplasma acidophilum (strain ATCC 25905 / DSM 1728 / JCM 9062 / NBRC 15155 / AMRC-C165) protein is Translation initiation factor 5A (eif5a).